Reading from the N-terminus, the 263-residue chain is Endonuclease 8 (263 aa).

The Schiff-base intermediate with DNA role is filled by Pro2. The Proton donor role is filled by Glu3. Catalysis depends on Lys53, which acts as the Proton donor; for beta-elimination activity. Positions 70, 125, and 169 each coordinate DNA. An FPG-type zinc finger spans residues 229–263 (KVFHRDGEACERCGGIIEKTTLSSRPFYWCPHCQK). Residue Arg253 is the Proton donor; for delta-elimination activity of the active site.

The protein belongs to the FPG family. Zn(2+) serves as cofactor.

It catalyses the reaction 2'-deoxyribonucleotide-(2'-deoxyribose 5'-phosphate)-2'-deoxyribonucleotide-DNA = a 3'-end 2'-deoxyribonucleotide-(2,3-dehydro-2,3-deoxyribose 5'-phosphate)-DNA + a 5'-end 5'-phospho-2'-deoxyribonucleoside-DNA + H(+). Functionally, involved in base excision repair of DNA damaged by oxidation or by mutagenic agents. Acts as a DNA glycosylase that recognizes and removes damaged bases. Has a preference for oxidized pyrimidines, such as thymine glycol, 5,6-dihydrouracil and 5,6-dihydrothymine. Has AP (apurinic/apyrimidinic) lyase activity and introduces nicks in the DNA strand. Cleaves the DNA backbone by beta-delta elimination to generate a single-strand break at the site of the removed base with both 3'- and 5'-phosphates. The protein is Endonuclease 8 of Salmonella paratyphi A (strain AKU_12601).